The following is a 422-amino-acid chain: Oxysterol-binding protein 7 (422 aa).

A disordered region spans residues 283–313 (EAAPASSASKKEKKKEKKKAKHSKHTCSPSD). Basic residues predominate over residues 293–307 (KEKKKEKKKAKHSKH). Residues 354 to 384 (MQAADQIKKEIEDEQRKRLQITKEEEKKERA) adopt a coiled-coil conformation. Residues 402 to 422 (TLAPVSNSTSSTASDAASGSN) form a disordered region. Residues 407-422 (SNSTSSTASDAASGSN) show a composition bias toward low complexity.

The protein belongs to the OSBP family.

The protein is Oxysterol-binding protein 7 (osbG) of Dictyostelium discoideum (Social amoeba).